A 132-amino-acid polypeptide reads, in one-letter code: MLKYMLDTNIVIYVIKRRPLEILSRFNQNAGKMCVSSITVAELYYGAEKSEYPERNIAVIEDFLSRLTILDYQPKHAAHFGNIKAELSKQGKLIGENDIHIAAHARSEGLILVSNNLREFERVIALRTENWV.

In terms of domain architecture, PINc spans 4–123 (YMLDTNIVIY…SNNLREFERV (120 aa)). Mg(2+) is bound by residues Asp7 and Asp98.

This sequence belongs to the PINc/VapC protein family. As to quaternary structure, probably forms a complex with cognate antitoxin VapB2. Mg(2+) is required as a cofactor.

Its function is as follows. Toxic component of a type II toxin-antitoxin (TA) system. Acts as an RNase. Its toxic effect is neutralized by cognate antitoxin VapB2 but not by non-cognate antitoxin VapB1. The polypeptide is Ribonuclease VapC (Haemophilus influenzae (strain 86-028NP)).